A 478-amino-acid chain; its full sequence is Zinc metalloproteinase/disintegrin (478 aa).

Positions 1 to 20 are cleaved as a signal peptide; the sequence is MIQVLLVTICLAVFPYQGSS. Residues 21–194 constitute a propeptide that is removed on maturation; it reads KTLKSGNVND…KASQLNLTPE (174 aa). Pyrrolidone carboxylic acid is present on glutamine 195. The 197-residue stretch at 201 to 397 folds into the Peptidase M12B domain; that stretch reads RYIELVIVAD…RNPQCILNQP (197 aa). Positions 204 and 288 each coordinate Ca(2+). Cystine bridges form between cysteine 312-cysteine 392, cysteine 352-cysteine 376, and cysteine 354-cysteine 359. Residue histidine 337 participates in Zn(2+) binding. Glutamate 338 is an active-site residue. Zn(2+) contacts are provided by histidine 341 and histidine 347. 2 residues coordinate Ca(2+): cysteine 392 and asparagine 395. A propeptide spanning residues 398–413 is cleaved from the precursor; it reads LRTDTVSTPVSGNELL. Residues 405–478 enclose the Disintegrin domain; that stretch reads TPVSGNELLQ…SDCPRNPYKD (74 aa). Disulfide bonds link cysteine 420–cysteine 443, cysteine 434–cysteine 440, cysteine 439–cysteine 464, and cysteine 452–cysteine 471. The short motif at 456–458 is the Cell attachment site; atypical (VGD) element; the sequence is VGD.

This sequence belongs to the venom metalloproteinase (M12B) family. P-II subfamily. P-IIe sub-subfamily. Monomer (metalloproteinase). Heterodimer; disulfide-linked (disintegrin). Zn(2+) is required as a cofactor. In terms of tissue distribution, expressed by the venom gland.

Its subcellular location is the secreted. Its activity is regulated as follows. Fibrinolytic and caseinolytic activities are inhibited by Cd(2+), Cu(2+) and Co(2+) ions. Not inhibited by Mg(2+), Ca(2+) and Ba(2+). Also inhibited by EDTA, EGTA and 1,10-phenanthroline. In terms of biological role, fibrinolytic and fibrinogenolytic metalloproteinase that hydrolyzes the Aalpha-chain and more slowly the Bbeta-chain of fibrin and fibrinogen. Its fibrinolytic activity is direct, without any plasminogen activation. Also hydrolyzes casein and B-chain of oxidized insulin. Inhibits ADP-induced and collagen-induced platelet aggregation. Shows low hemorrhagic activity. Cleaves the plasma proteinase inhibitors alpha(2)-macroglobulin (A2M) and pregnancy zone protein (PZP), and is inhibited by them. The metalloprotease has no strict P1-P1' specificity requirement. Hydrolysis at sites with a Pro residue at P1 is observed with bradykinin, substance P, PZP and alpha chain fibrinogen (FGA). Functionally, poor inhibitor of platelet aggregation. The disintegrin inhibits the adhesion of the alpha-4/beta-1 (ITGA4/ITGB1) integrin to VCAM-1. Inhibition on alpha-2b/beta-3 (ITGA2B/ITGB3) is low. This is Zinc metalloproteinase/disintegrin from Macrovipera lebetinus (Levantine viper).